Reading from the N-terminus, the 103-residue chain is Small ribosomal subunit protein uS10 (103 aa).

It belongs to the universal ribosomal protein uS10 family. As to quaternary structure, part of the 30S ribosomal subunit.

Involved in the binding of tRNA to the ribosomes. The polypeptide is Small ribosomal subunit protein uS10 (Helicobacter hepaticus (strain ATCC 51449 / 3B1)).